The chain runs to 2253 residues: Genome polyprotein (2253 aa).

The cysteines at positions 627 and 694 are disulfide-linked. The Cell attachment site signature appears at R750–D752. Positions L825–Q920 constitute an LRAT domain. Active-site for protein 2A H-NC residues include H835 and H846. Catalysis depends on C904, which acts as the For protein 2A H-NC; Acyl-thioester intermediate. Residues I1002–V1022 form a helical membrane-spanning segment. One can recognise an SF3 helicase domain in the interval Y1205–D1366. Y1559 carries the O-(5'-phospho-RNA)-tyrosine modification. In terms of domain architecture, Peptidase C3 spans A1586 to N1775. Catalysis depends on for protease 3C activity residues H1626, D1664, and C1739. The active-site Acyl-thioester intermediate is C1970. Residues P2018–Y2132 form the RdRp catalytic domain. The Mg(2+) site is built by D2024 and D2118.

It belongs to the picornaviruses polyprotein family. As to quaternary structure, interacts with capsid protein VP1 and capsid protein VP3 to form heterotrimeric protomers. Five protomers subsequently associate to form pentamers which serve as building blocks for the capsid. Interacts with capsid protein VP0, and capsid protein VP3 to form heterotrimeric protomers. Five protomers subsequently associate to form pentamers which serve as building blocks for the capsid. In terms of assembly, interacts with capsid protein VP0 and capsid protein VP1 to form heterotrimeric protomers. Five protomers subsequently associate to form pentamers which serve as building blocks for the capsid. As to quaternary structure, homohexamer; forms a hexameric ring structure with 6-fold symmetry characteristic of AAA+ ATPases. Homodimer. Interacts with host ACBD3. In terms of assembly, interacts with RNA-directed RNA polymerase. As to quaternary structure, interacts with Viral protein genome-linked. The cofactor is Mg(2+). Post-translationally, VPg is uridylylated by the polymerase and is covalently linked to the 5'-end of genomic RNA. This uridylylated form acts as a nucleotide-peptide primer for the polymerase. Specific enzymatic cleavages yield mature proteins. All cleavages are catalyzed by P3C.

Its subcellular location is the virion. It is found in the host cytoplasm. The protein localises to the host nucleus. The protein resides in the host nucleolus. It localises to the host cytoplasmic vesicle membrane. Its subcellular location is the host endoplasmic reticulum membrane. It is found in the host Golgi apparatus membrane. It carries out the reaction RNA(n) + a ribonucleoside 5'-triphosphate = RNA(n+1) + diphosphate. It catalyses the reaction a ribonucleoside 5'-triphosphate + H2O = a ribonucleoside 5'-diphosphate + phosphate + H(+). The catalysed reaction is Selective cleavage of Gln-|-Gly bond in the poliovirus polyprotein. In other picornavirus reactions Glu may be substituted for Gln, and Ser or Thr for Gly.. Its function is as follows. Forms an icosahedral capsid of pseudo T=3 symmetry together with capsid proteins VP1 and VP3. The capsid is 300 Angstroms in diameter, composed of 60 copies of each capsid protein and enclosing the viral positive strand RNA genome. The attachment to the host cell receptor induces virion internalization predominantly through clathrin-mediated endocytosis. Binds packaging signals present in the viral RNA. In terms of biological role, forms an icosahedral capsid of pseudo T=3 symmetry together with capsid proteins VP0 and VP1. The capsid is 300 Angstroms in diameter, composed of 60 copies of each capsid protein and enclosing the viral positive strand RNA genome. The attachment to the host cell receptor induces virion internalization predominantly through clathrin-mediated endocytosis. Binds packaging signals present in the viral RNA. Forms an icosahedral capsid of pseudo T=3 symmetry together with capsid proteins VP0 and VP3. The capsid is 300 Angstroms in diameter, composed of 60 copies of each capsid protein and enclosing the viral positive strand RNA genome. The attachment to the host cell receptor induces virion internalization predominantly through clathrin-mediated endocytosis. Binds packaging signals present in the viral RNA. Functionally, mediates self-processing of the polyprotein by a translational effect termed 'ribosome skipping'. Mechanistically, 2A1-mediated cleavage occurs between the C-terminal glycine and the proline of the downstream protein 2A2. Its function is as follows. Plays an essential role in the virus replication cycle by acting as a viroporin. Creates a pore in the host endoplasmic reticulum and as a consequence releases Ca2+ in the cytoplasm of infected cell. In turn, high levels of cytoplasmic calcium may trigger membrane trafficking and transport of viral ER-associated proteins to viroplasms, sites of viral genome replication. In terms of biological role, induces and associates with structural rearrangements of intracellular membranes. Displays RNA-binding, nucleotide binding and NTPase activities. May play a role in virion morphogenesis and viral RNA encapsidation by interacting with the capsid protein VP3. Localizes the viral replication complex to the surface of membranous vesicles. It inhibits host cell endoplasmic reticulum-to-Golgi apparatus transport and causes the disassembly of the Golgi complex, possibly through GBF1 interaction. This would result in depletion of MHC, trail receptors and IFN receptors at the host cell surface. Plays an essential role in viral RNA replication by recruiting ACBD3 and PI4KB at the viral replication sites, thereby allowing the formation of the rearranged membranous structures where viral replication takes place. Functionally, acts as a primer for viral RNA replication and remains covalently bound to viral genomic RNA. VPg is uridylylated prior to priming replication into VPg-pUpU. The VPg-pUpU is then used as primer on the genomic RNA poly(A) by the RNA-dependent RNA polymerase to replicate the viral genome. Following genome release from the infecting virion in the cytoplasm, the VPg-RNA linkage is probably removed by host TDP2. During the late stage of the replication cycle, host TDP2 is excluded from sites of viral RNA synthesis and encapsidation, allowing for the generation of progeny virions. Its function is as follows. Cysteine protease that generates mature viral proteins from the precursor polyprotein. In addition to its proteolytic activity, it binds to viral RNA, and thus influences viral genome replication. RNA and substrate bind cooperatively to the protease. In terms of biological role, replicates the viral genomic RNA on the surface of intracellular membranes. Covalently attaches UMP to a tyrosine of VPg, which is used to prime RNA synthesis. The positive stranded RNA genome is first replicated at virus induced membranous vesicles, creating a dsRNA genomic replication form. This dsRNA is then used as template to synthesize positive stranded RNA genomes. ss(+)RNA genomes are either translated, replicated or encapsidated. The chain is Genome polyprotein from Ljunganvirus 1 (LV).